Here is a 679-residue protein sequence, read N- to C-terminus: Protein SQS1 (679 aa).

4 disordered regions span residues 1–40, 76–161, 242–315, and 391–419; these read MAKRHKHYENRGSSGRGRRGGRAGHRGRGGRRRYAERNNS, DSMR…PEPK, VSEE…PGFG, and PEEPADDGADDHYGDENYDDSEEDEQDDE. Residues 16 to 32 show a composition bias toward basic residues; it reads RGRRGGRAGHRGRGGRR. The span at 146-156 shows a compositional bias: acidic residues; that stretch reads GDDEPEGEYEP. The segment covering 406-419 has biased composition (acidic residues); the sequence is ENYDDSEEDEQDDE. Residues 514–576 form the R3H domain; sequence GFHIENIIDE…HTRVLVQKGG (63 aa). Positions 633 to 679 constitute a G-patch domain; the sequence is QDNVGRRLLEKLGWTHGEGLGVHGNKGISEPLMARVKKNRSGLRYTE.

Belongs to the SQS1 family.

It is found in the cytoplasm. Its subcellular location is the nucleus. Functionally, may be involved in splicing. The polypeptide is Protein SQS1 (SQS1) (Eremothecium gossypii (strain ATCC 10895 / CBS 109.51 / FGSC 9923 / NRRL Y-1056) (Yeast)).